Reading from the N-terminus, the 399-residue chain is Protein DDI1 homolog 2 (399 aa).

The region spanning 1–81 (MLLTVYCVRR…VILRQKENAD (81 aa)) is the Ubiquitin-like domain. The disordered stretch occupies residues 99–134 (IAVPGTSNPQQRQLPRTQAQHSSPGEMASSPQGLDN). Positions 103–131 (GTSNPQQRQLPRTQAQHSSPGEMASSPQG) are enriched in polar residues. The residue at position 104 (Thr-104) is a Phosphothreonine. Phosphoserine occurs at positions 121, 128, 150, and 194. The active site involves Asp-252. Residues 376-395 (EEIADQELAEAIQKSAEDAE) carry the Ubiquitin-binding motif.

The protein belongs to the DDI1 family. Homodimer.

It is found in the cytoplasm. The protein resides in the cytosol. Its subcellular location is the chromosome. In terms of biological role, aspartic protease that mediates the cleavage of NFE2L1/NRF1 at 'Leu-104', thereby promoting release of NFE2L1/NRF1 from the endoplasmic reticulum membrane. Ubiquitination of NFE2L1/NRF1 is a prerequisite for cleavage, suggesting that DDI2 specifically recognizes and binds ubiquitinated NFE2L1/NRF1. Seems to act as a proteasomal shuttle which links the proteasome and replication fork proteins like RTF2. Required, with DDI1, for cellular survival following replication stress. Together or redudantly with DDI1, removes RTF2 from stalled forks to allow cell cycle progression after replication stress and maintains genome integrity. This Mus musculus (Mouse) protein is Protein DDI1 homolog 2.